The following is a 521-amino-acid chain: Probable protein kinase UbiB (521 aa).

The region spanning 119-497 is the Protein kinase domain; the sequence is QFDETPIASA…QKRTNRLLQT (379 aa). ATP-binding positions include 125 to 133 and Lys151; that span reads IASASIAQV. Catalysis depends on Asp286, which acts as the Proton acceptor. A helical transmembrane segment spans residues 496–516; the sequence is QTIIYGGIGFVLGLLAMQLLV.

Belongs to the ABC1 family. UbiB subfamily.

It localises to the cell inner membrane. Its pathway is cofactor biosynthesis; ubiquinone biosynthesis [regulation]. Its function is as follows. Is probably a protein kinase regulator of UbiI activity which is involved in aerobic coenzyme Q (ubiquinone) biosynthesis. The protein is Probable protein kinase UbiB of Variovorax paradoxus (strain S110).